The following is a 360-amino-acid chain: MANTVHLSSSSLFIQTRGRKYNSILSFNNLQKRTVLSLSCALTSQGGKDMIPPKGKSNDRNFAFDFKSYMIRKAESVSMALNVSVPPQDPLAIQEAVRYSLLAGGKRVRPLLCIAACELVGGDEATAMSAACAVEMIHTSSLIHDDLPCMDDADLRRGKPTNHKVFGEHMAVLAGDALLALAFEHMTVVSSGLVAPERMIRSVTELAKAIGTKGLVAGQVSDLCSQGLNPYDVGLERLEFIHLHKTAALLEAAAVLGAIIGGGTEEEIQKLRKYGRCIGLLFQVVDDIIDVTESTEELGKTAGKDVMARKLTYPRLIGLERSREVAEKLRREAAEQLLGFDSNKVAPLVALASYIACRHN.

The N-terminal 39 residues, 1–39 (MANTVHLSSSSLFIQTRGRKYNSILSFNNLQKRTVLSLS), are a transit peptide targeting the chloroplast. Isopentenyl diphosphate-binding residues include Lys106, Arg109, and His138. 2 residues coordinate Mg(2+): Asp145 and Asp151. Residue Arg156 participates in dimethylallyl diphosphate binding. Arg157 lines the isopentenyl diphosphate pocket. The dimethylallyl diphosphate site is built by Lys245, Thr246, Gln283, Lys300, and Lys310.

This sequence belongs to the FPP/GGPP synthase family. As to quaternary structure, monomer. It depends on Mg(2+) as a cofactor.

Its subcellular location is the plastid. The protein localises to the chloroplast. The catalysed reaction is isopentenyl diphosphate + dimethylallyl diphosphate = (2E)-geranyl diphosphate + diphosphate. The enzyme catalyses isopentenyl diphosphate + (2E)-geranyl diphosphate = (2E,6E)-farnesyl diphosphate + diphosphate. It carries out the reaction isopentenyl diphosphate + (2E,6E)-farnesyl diphosphate = (2E,6E,10E)-geranylgeranyl diphosphate + diphosphate. The protein operates within isoprenoid biosynthesis; farnesyl diphosphate biosynthesis; farnesyl diphosphate from geranyl diphosphate and isopentenyl diphosphate: step 1/1. Its pathway is isoprenoid biosynthesis; geranyl diphosphate biosynthesis; geranyl diphosphate from dimethylallyl diphosphate and isopentenyl diphosphate: step 1/1. It functions in the pathway isoprenoid biosynthesis; geranylgeranyl diphosphate biosynthesis; geranylgeranyl diphosphate from farnesyl diphosphate and isopentenyl diphosphate: step 1/1. Its function is as follows. Catalyzes the trans-addition of the three molecules of IPP onto DMAPP to form geranylgeranyl pyrophosphate. The sequence is that of Geranylgeranyl pyrophosphate synthase 12, chloroplastic from Arabidopsis thaliana (Mouse-ear cress).